The chain runs to 389 residues: Alkanesulfonate monooxygenase (389 aa).

Belongs to the SsuD family.

The catalysed reaction is an alkanesulfonate + FMNH2 + O2 = an aldehyde + FMN + sulfite + H2O + 2 H(+). Its function is as follows. Catalyzes the desulfonation of aliphatic sulfonates. This chain is Alkanesulfonate monooxygenase, found in Agrobacterium fabrum (strain C58 / ATCC 33970) (Agrobacterium tumefaciens (strain C58)).